Reading from the N-terminus, the 325-residue chain is Lipoyl synthase (325 aa).

Positions 72, 77, 83, 98, 102, 105, and 312 each coordinate [4Fe-4S] cluster. Residues Phe84–Lys301 enclose the Radical SAM core domain.

It belongs to the radical SAM superfamily. Lipoyl synthase family. Requires [4Fe-4S] cluster as cofactor.

The protein localises to the cytoplasm. It carries out the reaction [[Fe-S] cluster scaffold protein carrying a second [4Fe-4S](2+) cluster] + N(6)-octanoyl-L-lysyl-[protein] + 2 oxidized [2Fe-2S]-[ferredoxin] + 2 S-adenosyl-L-methionine + 4 H(+) = [[Fe-S] cluster scaffold protein] + N(6)-[(R)-dihydrolipoyl]-L-lysyl-[protein] + 4 Fe(3+) + 2 hydrogen sulfide + 2 5'-deoxyadenosine + 2 L-methionine + 2 reduced [2Fe-2S]-[ferredoxin]. It functions in the pathway protein modification; protein lipoylation via endogenous pathway; protein N(6)-(lipoyl)lysine from octanoyl-[acyl-carrier-protein]: step 2/2. Catalyzes the radical-mediated insertion of two sulfur atoms into the C-6 and C-8 positions of the octanoyl moiety bound to the lipoyl domains of lipoate-dependent enzymes, thereby converting the octanoylated domains into lipoylated derivatives. This chain is Lipoyl synthase, found in Stutzerimonas stutzeri (strain A1501) (Pseudomonas stutzeri).